The sequence spans 276 residues: Large ribosomal subunit protein uL2 (276 aa).

The segment at 223–276 (AVMNPVDHPHGGGEGKNSVGRKSPLTPWGKPALGIKTRGRKTSDKFIVRRRNEK) is disordered. Basic and acidic residues predominate over residues 263 to 276 (KTSDKFIVRRRNEK).

This sequence belongs to the universal ribosomal protein uL2 family. In terms of assembly, part of the 50S ribosomal subunit. Forms a bridge to the 30S subunit in the 70S ribosome.

One of the primary rRNA binding proteins. Required for association of the 30S and 50S subunits to form the 70S ribosome, for tRNA binding and peptide bond formation. It has been suggested to have peptidyltransferase activity; this is somewhat controversial. Makes several contacts with the 16S rRNA in the 70S ribosome. This Fusobacterium nucleatum subsp. nucleatum (strain ATCC 25586 / DSM 15643 / BCRC 10681 / CIP 101130 / JCM 8532 / KCTC 2640 / LMG 13131 / VPI 4355) protein is Large ribosomal subunit protein uL2.